A 156-amino-acid polypeptide reads, in one-letter code: Ribosome-binding factor A (156 aa).

The segment covering 125–138 (RVREGAKHAGDPDP) has biased composition (basic and acidic residues). The disordered stretch occupies residues 125–156 (RVREGAKHAGDPDPYRVGGAEDTDGDTDGDER). Over residues 145-156 (EDTDGDTDGDER) the composition is skewed to acidic residues.

This sequence belongs to the RbfA family. In terms of assembly, monomer. Binds 30S ribosomal subunits, but not 50S ribosomal subunits or 70S ribosomes.

The protein resides in the cytoplasm. Functionally, one of several proteins that assist in the late maturation steps of the functional core of the 30S ribosomal subunit. Associates with free 30S ribosomal subunits (but not with 30S subunits that are part of 70S ribosomes or polysomes). Required for efficient processing of 16S rRNA. May interact with the 5'-terminal helix region of 16S rRNA. This chain is Ribosome-binding factor A, found in Mycolicibacterium smegmatis (strain ATCC 700084 / mc(2)155) (Mycobacterium smegmatis).